Reading from the N-terminus, the 460-residue chain is Muscarinic acetylcholine receptor M1 (460 aa).

Residues 1–22 are Extracellular-facing; it reads MNTSAPPAVSPNITVLAPGKGP. Asparagine 2 and asparagine 12 each carry an N-linked (GlcNAc...) asparagine glycan. A helical membrane pass occupies residues 23-48; the sequence is WQVAFIGITTGLLSLATVTGNLLVLI. Over 49 to 62 the chain is Cytoplasmic; sequence SFKVNTELKTVNNY. Residues 63–84 traverse the membrane as a helical segment; the sequence is FLLSLACADLIIGTFSMNLYTT. Residues 85–95 are Extracellular-facing; that stretch reads YLLMGHWALGT. The chain crosses the membrane as a helical span at residues 96-121; sequence LACDLWLALDYVASNASVMNLLLISF. The cysteines at positions 98 and 178 are disulfide-linked. Over 122-142 the chain is Cytoplasmic; sequence DRYFSVTRPLSYRAKRTPRRA. A helical membrane pass occupies residues 143–164; the sequence is ALMIGLAWLVSFVLWAPAILFW. The Extracellular segment spans residues 165-185; sequence QYLVGERTVLAGQCYIQFLSQ. A helical membrane pass occupies residues 186–209; that stretch reads PIITFGTAMAAFYLPVTVMCTLYW. At 210 to 366 the chain is on the cytoplasmic side; it reads RIYRETESRA…LVKEKKAART (157 aa). Disordered regions lie at residues 225-256, 274-297, and 310-351; these read LQGS…GTPP, WKEE…EEPG, and EAQA…QLAK. Threonine 230 is modified (phosphothreonine). Residues 238–247 are compositionally biased toward low complexity; that stretch reads SSSSERSQPG. Residues 328-343 show a composition bias toward basic residues; it reads RPTKKGRDRAGKGQKP. Residues 367 to 390 form a helical membrane-spanning segment; the sequence is LSAILLAFILTWTPYNIMVLVSTF. Over 391–397 the chain is Extracellular; that stretch reads CKDCVPE. A helical transmembrane segment spans residues 398–420; that stretch reads TLWELGYWLCYVNSTINPMCYAL. The Cytoplasmic portion of the chain corresponds to 421–460; it reads CNKAFRDTFRLLLLCRWDKRRWRKIPKRPGSVHRTPSRQC. The residue at position 428 (threonine 428) is a Phosphothreonine. Phosphoserine is present on serine 451. The residue at position 455 (threonine 455) is a Phosphothreonine. The residue at position 457 (serine 457) is a Phosphoserine.

This sequence belongs to the G-protein coupled receptor 1 family. Muscarinic acetylcholine receptor subfamily. CHRM1 sub-subfamily. As to quaternary structure, interacts with GPRASP2. Interacts with TMEM147.

It localises to the cell membrane. The protein localises to the postsynaptic cell membrane. In terms of biological role, the muscarinic acetylcholine receptor mediates various cellular responses, including inhibition of adenylate cyclase, breakdown of phosphoinositides and modulation of potassium channels through the action of G proteins. Primary transducing effect is Pi turnover. The sequence is that of Muscarinic acetylcholine receptor M1 (CHRM1) from Pongo abelii (Sumatran orangutan).